A 328-amino-acid chain; its full sequence is Probable E3 ubiquitin-protein ligase RHC1A (328 aa).

An N-acetylserine modification is found at Ser2. Residues 190-231 (CPVCKDEFELGSEAKQMPCNHIYHSDCIVPWLVQHNSCPVCR) form an RING-type; atypical zinc finger. The disordered stretch occupies residues 233 to 324 (ELPSASGPSS…QQSYMGYSGW (92 aa)). Over residues 238–250 (SGPSSSQNRTTPT) the composition is skewed to polar residues. Composition is skewed to low complexity over residues 251–266 (RNYR…NSRE) and 275–290 (FSSF…SSSS). Residues 291-300 (TQNRGGTRNS) are compositionally biased toward polar residues.

The catalysed reaction is S-ubiquitinyl-[E2 ubiquitin-conjugating enzyme]-L-cysteine + [acceptor protein]-L-lysine = [E2 ubiquitin-conjugating enzyme]-L-cysteine + N(6)-ubiquitinyl-[acceptor protein]-L-lysine.. The protein operates within protein modification; protein ubiquitination. Functionally, probable E3 ubiquitin-protein ligase that may possess E3 ubiquitin ligase activity in vitro. This chain is Probable E3 ubiquitin-protein ligase RHC1A, found in Arabidopsis thaliana (Mouse-ear cress).